The sequence spans 507 residues: Phosphoenolpyruvate carboxylase (507 aa).

A disordered region spans residues 1–25 (MHKIDRKIPNIMGTQHPDNAGVPFF).

This sequence belongs to the PEPCase type 2 family. Homotetramer. Mg(2+) serves as cofactor.

It catalyses the reaction oxaloacetate + phosphate = phosphoenolpyruvate + hydrogencarbonate. In terms of biological role, catalyzes the irreversible beta-carboxylation of phosphoenolpyruvate (PEP) to form oxaloacetate (OAA), a four-carbon dicarboxylic acid source for the tricarboxylic acid cycle. The chain is Phosphoenolpyruvate carboxylase from Oenococcus oeni (strain ATCC BAA-331 / PSU-1).